A 292-amino-acid polypeptide reads, in one-letter code: G1/S-specific cyclin-D3 (292 aa).

Residues 27–152 (VLQSLLRLEE…LVLGKLKWDL (126 aa)) form the Cyclin N-terminal domain. The tract at residues 254–292 (SLREASQTSSSPAPKAPRGSSSQGPSQTSTPTDVTAIHL) is disordered. Phosphoserine is present on residues Ser264 and Ser279. The segment covering 272–285 (GSSSQGPSQTSTPT) has biased composition (low complexity). Thr283 carries the phosphothreonine modification.

It belongs to the cyclin family. Cyclin D subfamily. Interacts with the CDK4 and CDK6 protein kinases to form a serine/threonine kinase holoenzyme complex. The cyclin subunit imparts substrate specificity to the complex. Interacts with ATF5. Interacts with EIF3K. Component of the ternary complex cyclin D/CDK4/CDKN1B required for nuclear translocation and modulation of CDK4-mediated kinase activity. Can form similar complexes with either CDKN1A or CDKN2A. In terms of processing, phosphorylation at Thr-283 by MAP kinases is required for ubiquitination and degradation by the DCX(AMBRA1) complex. Ubiquitinated by the DCX(AMBRA1) complex during the transition from G1 to S cell phase, leading to its degradation: ubiquitination is dependent on Thr-283 phosphorylation. The DCX(AMBRA1) complex represents the major regulator of CCND3 stability during the G1/S transition. Polyubiquitinated by the SCF(FBXL2) complex, leading to proteasomal degradation.

It localises to the nucleus. The protein localises to the cytoplasm. Functionally, regulatory component of the cyclin D3-CDK4 (DC) complex that phosphorylates and inhibits members of the retinoblastoma (RB) protein family including RB1 and regulates the cell-cycle during G(1)/S transition. Phosphorylation of RB1 allows dissociation of the transcription factor E2F from the RB/E2F complex and the subsequent transcription of E2F target genes which are responsible for the progression through the G(1) phase. Hypophosphorylates RB1 in early G(1) phase. Cyclin D-CDK4 complexes are major integrators of various mitogenenic and antimitogenic signals. Component of the ternary complex, cyclin D3/CDK4/CDKN1B, required for nuclear translocation and activity of the cyclin D-CDK4 complex. Shows transcriptional coactivator activity with ATF5 independently of CDK4. The polypeptide is G1/S-specific cyclin-D3 (Homo sapiens (Human)).